The primary structure comprises 745 residues: Elongation factor G, mitochondrial (745 aa).

The tr-type G domain occupies 40–317 (ERIRNIGISA…AVLDYLPNPG (278 aa)). Residues 49–56 (AHIDSGKT), 116–120 (DTPGH), and 170–173 (NKLD) contribute to the GTP site.

The protein belongs to the TRAFAC class translation factor GTPase superfamily. Classic translation factor GTPase family. EF-G/EF-2 subfamily.

The protein resides in the mitochondrion. It participates in protein biosynthesis; polypeptide chain elongation. Functionally, mitochondrial GTPase that catalyzes the GTP-dependent ribosomal translocation step during translation elongation. During this step, the ribosome changes from the pre-translocational (PRE) to the post-translocational (POST) state as the newly formed A-site-bound peptidyl-tRNA and P-site-bound deacylated tRNA move to the P and E sites, respectively. Catalyzes the coordinated movement of the two tRNA molecules, the mRNA and conformational changes in the ribosome. Essential during development as it acts as a retrograde signal from mitochondria to the nucleus to slow down cell proliferation if mitochondrial energy output is low. The protein is Elongation factor G, mitochondrial of Drosophila erecta (Fruit fly).